Here is a 272-residue protein sequence, read N- to C-terminus: Small ribosomal subunit biogenesis GTPase RsgA (272 aa).

One can recognise a CP-type G domain in the interval Lys56–Ile207. Residues Thr105–Asp108 and Gly151–Thr159 contribute to the GTP site. Residues Cys230, Cys235, His237, and Cys245 each contribute to the Zn(2+) site.

Belongs to the TRAFAC class YlqF/YawG GTPase family. RsgA subfamily. As to quaternary structure, monomer. Associates with 30S ribosomal subunit, binds 16S rRNA. It depends on Zn(2+) as a cofactor.

The protein resides in the cytoplasm. In terms of biological role, one of several proteins that assist in the late maturation steps of the functional core of the 30S ribosomal subunit. Helps release RbfA from mature subunits. May play a role in the assembly of ribosomal proteins into the subunit. Circularly permuted GTPase that catalyzes slow GTP hydrolysis, GTPase activity is stimulated by the 30S ribosomal subunit. In Mycoplasmopsis pulmonis (strain UAB CTIP) (Mycoplasma pulmonis), this protein is Small ribosomal subunit biogenesis GTPase RsgA.